The sequence spans 97 residues: Large ribosomal subunit protein bL36m (97 aa).

It belongs to the bacterial ribosomal protein bL36 family. Component of the mitochondrial ribosome large subunit (39S) which comprises a 16S rRNA and about 50 distinct proteins.

It localises to the mitochondrion. This is Large ribosomal subunit protein bL36m (Mrpl36) from Rattus norvegicus (Rat).